The chain runs to 961 residues: MGDSESVNQDHGRNTFLSRVFGLQPDDITTSIRTGDMSRYPLNAYSGGSEMFSGSPTSSRIDDDDDDDEGRVPESDQQSSSGDNSDDIKANDDVIEDVELTDGNGDNYTNSKMINTNYSIFGSLRKVGQQSSDEEDDGSLSNEEEDIDEEDEIDEIDADEPLFVNSTSQRKQKRKSSVNFKNGSEMSSLLFQRILNKKDSKSNGEASNKMFTSSNQGNHNYKYRNGHDLEGGVHFNKKEGRRNSLFGSHEAGGHKSHNSAPSKGPNLLKNISILNNTPSNKVYTLSPKERALWKWANVENLDVFLQEVYKYYLGSGFSCIVLRKLLNLTTLIFVVYISTYLGYCIDYSKLPTSSRLSDIIIDQCYTTRITGITKGLLWVFYVFVGLKVVQFYFDLQNLTDMHNFYNYLLGISDNELQTIPWQNIIQQLMYLKDQNALTANVVEVKAKNKIDPLVVANRIMRKDNYLIALYNENILDLSLPIPFYKESILTKTLEWNINLCIIGFAFNESGFIKQSFLKKSQHQFITEELRKRFMLAGFLNIILSPFLVTYFVLLYFLRYFNEFKTSPGTIGARQYTPMAEWTFREFNELYHIFQKRLGLSTVIADKYINQFPKESTDLILKFISFISGSFVAVLMSLTLLDSENFLNFEVTKDRSVLFYITVFGAIWSVCRNSISDEYKVYDPDETIKELSEFTHYLPKEWEGKHHTEDVKQEFCKLYNIRLIILLRELASLVLTPFILWFSLPACSDRIVDFFSDSSTYIDGLGYVCKYATFGINQANAQKVKGGKRHQDMKMNTNNFSNEVINESDEDVLDSDSDSEIDSNDKMMRSYMYFMEDYENSENAIGKNQLPRKKYKDPSLTNPSLNTDYSWRKQFQPGQRPELFRIGKHALQVPTNVRNLGKKSTLNSENPYDNSSNLGESFINPTIMPDRDLGRNGVNGGKKEAGMLRMVKDYYKTSDIGR.

Disordered stretches follow at residues 1 to 91 (MGDS…IKAN), 126 to 180 (KVGQ…SVNF), 198 to 225 (KDSKSNGEASNKMFTSSNQGNHNYKYRN), and 244 to 265 (SLFGSHEAGGHKSHNSAPSKGP). Residues 1-324 (MGDSESVNQD…SGFSCIVLRK (324 aa)) are Cytoplasmic-facing. A compositionally biased stretch (acidic residues) spans 132–160 (SDEEDDGSLSNEEEDIDEEDEIDEIDADE). The segment covering 203 to 219 (NGEASNKMFTSSNQGNH) has biased composition (polar residues). A helical membrane pass occupies residues 325–345 (LLNLTTLIFVVYISTYLGYCI). Over 346-374 (DYSKLPTSSRLSDIIIDQCYTTRITGITK) the chain is Lumenal. A helical transmembrane segment spans residues 375-395 (GLLWVFYVFVGLKVVQFYFDL). The Cytoplasmic portion of the chain corresponds to 396–536 (QNLTDMHNFY…EELRKRFMLA (141 aa)). Residues 537 to 557 (GFLNIILSPFLVTYFVLLYFL) lie within the membrane without spanning it. Residues 558–617 (RYFNEFKTSPGTIGARQYTPMAEWTFREFNELYHIFQKRLGLSTVIADKYINQFPKESTD) are Cytoplasmic-facing. The chain crosses the membrane as a helical span at residues 618 to 638 (LILKFISFISGSFVAVLMSLT). Topologically, residues 639–654 (LLDSENFLNFEVTKDR) are lumenal. The helical transmembrane segment at 655 to 675 (SVLFYITVFGAIWSVCRNSIS) threads the bilayer. At 676 to 721 (DEYKVYDPDETIKELSEFTHYLPKEWEGKHHTEDVKQEFCKLYNIR) the chain is on the cytoplasmic side. Residues 722-742 (LIILLRELASLVLTPFILWFS) lie within the membrane without spanning it. The Cytoplasmic portion of the chain corresponds to 743–961 (LPACSDRIVD…DYYKTSDIGR (219 aa)). The segment covering 900-918 (GKKSTLNSENPYDNSSNLG) has biased composition (polar residues). Positions 900–940 (GKKSTLNSENPYDNSSNLGESFINPTIMPDRDLGRNGVNGG) are disordered.

This sequence belongs to the ATG9 family. In terms of assembly, homotrimer; forms a homotrimer with a central pore that forms a path between the two membrane leaflets. Post-translationally, phosphorylated by ATG1. ATG1 phosphorylation is required for preautophagosome elongation.

It localises to the preautophagosomal structure membrane. Its subcellular location is the cytoplasmic vesicle membrane. The protein resides in the golgi apparatus membrane. It is found in the endoplasmic reticulum membrane. It catalyses the reaction a 1,2-diacyl-sn-glycero-3-phosphocholine(in) = a 1,2-diacyl-sn-glycero-3-phosphocholine(out). The catalysed reaction is a 1,2-diacyl-sn-glycero-3-phospho-L-serine(in) = a 1,2-diacyl-sn-glycero-3-phospho-L-serine(out). The enzyme catalyses a 1,2-diacyl-sn-glycero-3-phosphoethanolamine(in) = a 1,2-diacyl-sn-glycero-3-phosphoethanolamine(out). It carries out the reaction a 1,2-diacyl-sn-glycero-3-phospho-(1D-myo-inositol-3-phosphate)(in) = a 1,2-diacyl-sn-glycero-3-phospho-(1D-myo-inositol-3-phosphate)(out). Its function is as follows. Phospholipid scramblase involved in autophagy and cytoplasm to vacuole transport (Cvt) vesicle formation. Cycles between the preautophagosomal structure/phagophore assembly site (PAS) and the cytoplasmic vesicle pool and supplies membrane for the growing autophagosome. Lipid scramblase activity plays a key role in preautophagosomal structure/phagophore assembly by distributing the phospholipids that arrive through ATG2 from the cytoplasmic to the luminal leaflet of the bilayer, thereby driving autophagosomal membrane expansion. Required for mitophagy. Also involved in endoplasmic reticulum-specific autophagic process and is essential for the survival of cells subjected to severe ER stress. Different machineries are required for anterograde trafficking to the PAS during either the Cvt pathway or bulk autophagy and for retrograde trafficking. The chain is Autophagy-related protein 9 (ATG9) from Vanderwaltozyma polyspora (strain ATCC 22028 / DSM 70294 / BCRC 21397 / CBS 2163 / NBRC 10782 / NRRL Y-8283 / UCD 57-17) (Kluyveromyces polysporus).